We begin with the raw amino-acid sequence, 119 residues long: Large ribosomal subunit protein bL20 (119 aa).

Belongs to the bacterial ribosomal protein bL20 family.

Its function is as follows. Binds directly to 23S ribosomal RNA and is necessary for the in vitro assembly process of the 50S ribosomal subunit. It is not involved in the protein synthesizing functions of that subunit. This Listeria innocua serovar 6a (strain ATCC BAA-680 / CLIP 11262) protein is Large ribosomal subunit protein bL20.